We begin with the raw amino-acid sequence, 809 residues long: MSTSKYSKMISSKHGYKKTRIKNNTSDSDLFNLVMPKADVVGFKSKQGGISRQAISWAKFARLNNFYIWLFLAAVGLLGSIYLVAVDLIFKYVVFSWREAFMSLTENYFLQYLSFIAWTVALATGSCFIIKKICPAAVGSGIPDLKSIFSGFWNPFVVAPMVLLWKTIGLLLSYGSGLSIGKEGPYIHISATLANTLLSIKPFKSIAQNDTQRSQLLAACCALGVAATFGSPIGGVLFSIEATGTFYLISNYWRAFFTATVGAVGIKILLSNPSNDLLESFRTHFADLNLASAQLIAFIILGVLCGLLASLFISLYTKIYNWKKHNAELFKKITPFGEVIIVAAATAILSFPLKFLRLDHATAVHTMFTATPDSDNSEVLSELAVWTDSMPFNHGIILACFLYVVVKLVLTAVSITLPIPYGIYIPLFAIGSAVGRFVGELMLVLFPNSKEIYPTGYAVVGAAALCGGATRTVSSAMIILELTNDLTYMVPVLLGVVLSCGIGNLLNHSIYDCFLKNKNLPYLPFYKAKSDSLIARDVMKRDLYYVCQNTTLSQISNLLKRVDEHSIPVVSSDNDLQLIGTISTTTLEEVIAYHERLHSYSKSPLSLSDNGIDINDNDNNDNINNNQNNNNNNNNNNNNNNSNNQNNSLVSEAIEMNVLSDSDNDENNNLIPNIPINDNNIIIQNNIRNNNNNNFSDNNNNYNNNNYNNNNNNNNDNNTNNDNNINNNSNDINESISEETTIDLVQMELQNPWVVIDSSPFQIQETMPVRKIVFMFMMLGGNILYVTNKGKLTGVVAKTELVHQNNNKH.

Over 1–65 (MSTSKYSKMI…SWAKFARLNN (65 aa)) the chain is Cytoplasmic. Transmembrane regions (helical) follow at residues 66 to 86 (FYIW…LVAV), 110 to 130 (LQYL…CFII), 152 to 172 (FWNP…GLLL), 218 to 238 (AACC…GVLF), 246 to 266 (FYLI…AVGI), 295 to 315 (LIAF…FISL), 333 to 353 (ITPF…SFPL), 395 to 415 (GIIL…AVSI), 425 to 445 (IPLF…MLVL), 459 to 479 (VVGA…AMII), and 486 to 506 (LTYM…GNLL). Residues 539–597 (MKRDLYYVCQNTTLSQISNLLKRVDEHSIPVVSSDNDLQLIGTISTTTLEEVIAYHERL) form the CBS 1 domain. Disordered regions lie at residues 604–646 (PLSL…NNQN) and 692–729 (NNNF…NNNS). Over residues 620–646 (NDNINNNQNNNNNNNNNNNNNNSNNQN) the composition is skewed to low complexity. In terms of domain architecture, CBS 2 spans 756 to 809 (IDSSPFQIQETMPVRKIVFMFMMLGGNILYVTNKGKLTGVVAKTELVHQNNNKH).

Belongs to the chloride channel (TC 2.A.49) family.

It localises to the membrane. In terms of biological role, voltage-gated chloride channel. Chloride channels may have several functions including the regulation of cell volume, membrane potential stabilization and signal transduction. The protein is Chloride channel protein F (clcF) of Dictyostelium discoideum (Social amoeba).